The sequence spans 221 residues: MTTEPNSPFVDDPLSAVDARILGSLVEKQATTPETYPLTLNALVLACNQKTSREPVMNLTPGQVGQSLRQLEGRGLVKLVMGSRADRWEHTLGKGLELVAPQVALLGLLFLRGPQTLNELLTRSNRLHDFDDVEQIRHHLERLAGRGLAVHLERRAGQREDRYMHLLGSQADLEAAVAAMGSDPERAAPAALSADAEARIAELETRLAALEERLTRLEGGV.

This sequence belongs to the UPF0502 family.

The sequence is that of UPF0502 protein PSPA7_1674 from Pseudomonas paraeruginosa (strain DSM 24068 / PA7) (Pseudomonas aeruginosa (strain PA7)).